A 138-amino-acid polypeptide reads, in one-letter code: Basic phospholipase A2 vurtoxin (138 aa).

The N-terminal stretch at 1–16 (MRTLWIVAVCLIGVEG) is a signal peptide. 7 disulfides stabilise this stretch: cysteine 42–cysteine 131, cysteine 44–cysteine 60, cysteine 59–cysteine 111, cysteine 65–cysteine 138, cysteine 66–cysteine 104, cysteine 73–cysteine 97, and cysteine 91–cysteine 102. Residues tyrosine 43, glycine 45, and glycine 47 each contribute to the Ca(2+) site. Histidine 63 is an active-site residue. Aspartate 64 is a binding site for Ca(2+). Residue aspartate 105 is part of the active site.

The cofactor is Ca(2+). Expressed by the venom gland.

Its subcellular location is the secreted. The catalysed reaction is a 1,2-diacyl-sn-glycero-3-phosphocholine + H2O = a 1-acyl-sn-glycero-3-phosphocholine + a fatty acid + H(+). Snake venom phospholipase A2 that may have a strong anticoagulant activity. Is able to suppress the acetylcholine (ACh)-evoked current mediated by alpha-7 (CHRNA7)-similar nAChRs in L.stagnalis neurons (IC(50)=10.5 uM) and to compete with alpha-bungarotoxin for binding to muscle- and alpha-7 neuronal nAChR types, as well as to AChBPs. In inhibition of alpha-bungarotoxin binding, this toxin is mostly active against T.californica nAChR (IC(50)=0.26 uM), it is moderately active against human alpha-7 nAChR (IC(50)=14 uM), and is not active against L.stagnalis and A.californica AChBP (IC(50)&gt;30 uM). In Vipera renardi (Steppe viper), this protein is Basic phospholipase A2 vurtoxin.